Here is a 137-residue protein sequence, read N- to C-terminus: Large ribosomal subunit protein uL16 (137 aa).

The protein belongs to the universal ribosomal protein uL16 family. In terms of assembly, part of the 50S ribosomal subunit.

Functionally, binds 23S rRNA and is also seen to make contacts with the A and possibly P site tRNAs. The chain is Large ribosomal subunit protein uL16 from Bartonella tribocorum (strain CIP 105476 / IBS 506).